Reading from the N-terminus, the 878-residue chain is Protein translocase subunit SecA (878 aa).

ATP contacts are provided by residues Gln81, 99 to 103 (GEGKT), and Asp489.

This sequence belongs to the SecA family.

It is found in the plastid. The protein resides in the chloroplast stroma. It localises to the chloroplast thylakoid membrane. The enzyme catalyses ATP + H2O + cellular proteinSide 1 = ADP + phosphate + cellular proteinSide 2.. In terms of biological role, has a central role in coupling the hydrolysis of ATP to the transfer of proteins across the thylakoid membrane. The chain is Protein translocase subunit SecA from Thalassiosira pseudonana (Marine diatom).